Consider the following 471-residue polypeptide: Microtubule-associated tyrosine carboxypeptidase 1 (471 aa).

Disordered regions lie at residues 1–40 (MVLD…PLYP) and 76–116 (HMRR…LRPA). Residue His280 participates in Zn(2+) binding. Glu281 acts as the Nucleophile in catalysis. His285 and Glu316 together coordinate Zn(2+).

This sequence belongs to the peptidase MATCAP family. Zn(2+) is required as a cofactor.

The protein localises to the cytoplasm. It localises to the cytoskeleton. It carries out the reaction C-terminal L-alpha-aminoacyl-L-glutamyl-L-glutamyl-L-tyrosyl-[tubulin] + H2O = C-terminal L-alpha-aminoacyl-L-glutamyl-L-glutamyl-[tubulin] + L-tyrosine. It catalyses the reaction C-terminal L-alpha-aminoacyl-L-glutamyl-L-glutamyl-L-phenylalanyl-[tubulin] + H2O = C-terminal L-alpha-aminoacyl-L-glutamyl-L-glutamyl-[tubulin] + L-phenylalanine. In terms of biological role, tyrosine carboxypeptidase that removes the C-terminal tyrosine residue of alpha-tubulin, thereby regulating microtubule dynamics and function. Also able to remove the C-terminal phenylalanine residue of alpha-tubulin TUBA8. Recognizes adjacent tubulin dimers along the same protofilament. This Homo sapiens (Human) protein is Microtubule-associated tyrosine carboxypeptidase 1.